The chain runs to 522 residues: Stellatic acid synthase (522 aa).

The helical transmembrane segment at 23-43 (IYGIYEPLLALFAVYSVAVVV) threads the bilayer. N-linked (GlcNAc...) asparagine glycans are attached at residues N267 and N451. Residue C464 participates in heme binding. Residue N495 is glycosylated (N-linked (GlcNAc...) asparagine).

This sequence belongs to the cytochrome P450 family. The cofactor is heme.

The protein resides in the membrane. The enzyme catalyses stellata-2,6,19-triene + 3 reduced [NADPH--hemoprotein reductase] + 3 O2 = stellatate + 3 oxidized [NADPH--hemoprotein reductase] + 4 H2O + 4 H(+). The protein operates within secondary metabolite biosynthesis; terpenoid biosynthesis. Its function is as follows. Cytochrome P450 monooxygenase; part of the gene cluster that mediates the biosynthesis of the sesterterpene stellatic acid. The first step in the pathway is performed by the stellatatriene synthase that possesses both prenyl transferase and terpene cyclase activity, converting isopentenyl diphosphate and dimethylallyl diphosphate into geranylgeranyl diphosphate (GGDP) and then converting GGDP into stellata-2,6,19-triene. The cytochrome P450 monooxygenase Stl-P450 then catalyzes three successive oxidation reactions on the C-20 methyl group to generate the carboxylic acid of stellatic acid. The protein is Stellatic acid synthase of Emericella variicolor (Aspergillus stellatus).